A 601-amino-acid polypeptide reads, in one-letter code: Probable cytochrome P450 525A1 (601 aa).

Residues 12 to 32 form a helical membrane-spanning segment; that stretch reads ISYFLTCSIFGFILWILTEQI. The disordered stretch occupies residues 205–253; that stretch reads NNNNNNNNNNNNNNNNNNNNNNNNNNNNNNNNNNNNNNNNNNNNNNNNN. Position 544 (cysteine 544) interacts with heme.

It belongs to the cytochrome P450 family. The cofactor is heme.

The protein resides in the membrane. In Dictyostelium discoideum (Social amoeba), this protein is Probable cytochrome P450 525A1 (cyp525A1).